The following is a 121-amino-acid chain: Large ribosomal subunit protein uL18 (121 aa).

Belongs to the universal ribosomal protein uL18 family. Part of the 50S ribosomal subunit; part of the 5S rRNA/L5/L18/L25 subcomplex. Contacts the 5S and 23S rRNAs.

In terms of biological role, this is one of the proteins that bind and probably mediate the attachment of the 5S RNA into the large ribosomal subunit, where it forms part of the central protuberance. This Ehrlichia chaffeensis (strain ATCC CRL-10679 / Arkansas) protein is Large ribosomal subunit protein uL18.